The following is a 302-amino-acid chain: Serine/threonine-protein phosphatase alpha-3 isoform (302 aa).

Mn(2+) is bound by residues Asp62, His64, Asp90, and Asn122. Catalysis depends on His123, which acts as the Proton donor. The Mn(2+) site is built by His171 and His246.

It belongs to the PPP phosphatase family. PP-1 subfamily. As to quaternary structure, interacts with Nop17l. It depends on Mn(2+) as a cofactor.

It carries out the reaction O-phospho-L-seryl-[protein] + H2O = L-seryl-[protein] + phosphate. It catalyses the reaction O-phospho-L-threonyl-[protein] + H2O = L-threonyl-[protein] + phosphate. The chain is Serine/threonine-protein phosphatase alpha-3 isoform (Pp1-13C) from Drosophila melanogaster (Fruit fly).